The chain runs to 115 residues: Large ribosomal subunit protein bL19 (115 aa).

The protein belongs to the bacterial ribosomal protein bL19 family.

Functionally, this protein is located at the 30S-50S ribosomal subunit interface and may play a role in the structure and function of the aminoacyl-tRNA binding site. This Francisella tularensis subsp. mediasiatica (strain FSC147) protein is Large ribosomal subunit protein bL19.